We begin with the raw amino-acid sequence, 148 residues long: Hemoglobin subunit beta (148 aa).

The Globin domain occupies 3-148; the sequence is DWTDAERSAI…VVSALGRQYH (146 aa). Residues histidine 64 and histidine 93 each coordinate heme b.

Belongs to the globin family. In terms of assembly, heterotetramer of two alpha chains and two beta chains. In terms of tissue distribution, red blood cells.

Its function is as follows. Involved in oxygen transport from gills to the various peripheral tissues. The polypeptide is Hemoglobin subunit beta (hbb) (Salmo salar (Atlantic salmon)).